We begin with the raw amino-acid sequence, 188 residues long: Succinate dehydrogenase [ubiquinone] cytochrome b large subunit, mitochondrial (188 aa).

Residues 1–31 (MSLLPYNATLCRVLRHNVKFIRSVQTSAARV) constitute a mitochondrion transit peptide. At 32–69 (SAEKTPIQVWGWDYLMRQRALKRPIAPHLTIYKPQMTW) the chain is on the mitochondrial matrix side. A helical membrane pass occupies residues 70–95 (MVSGLHRVTGCAMAGTLLIGGVGFSV). A rhodoquinol contacts are provided by Ser72 and Arg76. Positions 72 and 76 each coordinate a ubiquinone. Residues 96–113 (LPLDFTTFVEFIRGLGIP) are Mitochondrial intermembrane-facing. Residues 114–140 (WVILDTFKFIIAFPIAFHTLNGIRFIG) form a helical membrane-spanning segment. A heme b-binding site is contributed by His131. Topologically, residues 141 to 153 (FDMAKGTDIPSIY) are mitochondrial matrix. The helical transmembrane segment at 154 to 176 (RGAYLVLGLAALISLAVVVYPRW) threads the bilayer. Residues 177-188 (ERHKKATLPTNH) lie on the Mitochondrial intermembrane side of the membrane.

Belongs to the cytochrome b558 family. Component of the mitochondrial electron transport chain complex II composed of four subunits: a flavoprotein (Fp), an iron-sulfur protein (Ip), and a large cytochrome b (CybL) subunit and a small cytochrome b (CybS) subunit. There are 2 developmental stage-specific forms of complex II which have the Ip and CybL subunits in common. Complex II from the free-living larvae (aerobic environment) acts as a succinate dehydrogenase and is composed of the common subunit Ip and CybL and the stage specific subunits FpL and CybSL. Complex II from parasitic larvae and adults (anaerobic environment) acts as a fumarate reductase and is composed of the common subunit Ip and CybL and the stage specific subunits FpA and CybSA. Requires heme b as cofactor. In terms of tissue distribution, expressed in adult muscles (at protein level).

It is found in the mitochondrion inner membrane. It participates in carbohydrate metabolism; tricarboxylic acid cycle; fumarate from succinate (eukaryal route): step 1/1. Its function is as follows. Membrane-bound large subunit (CybL) of the mitochondrial electron transport chain complex II, which together with the membrane-bound small subunit (CybS), anchor the catalytic subunits to the inner mitochondria membrane. During the free-living egg-larvae stages, which occur in an aerobic environment, complex II acts as a succinate dehydrogenase by transferring electrons from succinate to ubiquinone. During the parasitic larvae and adult stages, which occur in an anaerobic environment, complex II acts as a fumarate reductase by transferring electrons from rhodoquinol to fumarate. This Ascaris suum (Pig roundworm) protein is Succinate dehydrogenase [ubiquinone] cytochrome b large subunit, mitochondrial.